The sequence spans 541 residues: Transmembrane protein 151 homolog (541 aa).

A run of 3 helical transmembrane segments spans residues 27 to 47 (GYGK…YATF), 73 to 93 (YNFV…MECW), and 254 to 274 (PWFL…SWPL). Positions 503 to 541 (ASISHSSSKDLKSLTLKSSSSNNNNNNSNNNNNDDPEHP) are disordered. Low complexity predominate over residues 515-535 (SLTLKSSSSNNNNNNSNNNNN).

The protein belongs to the TMEM151 family.

Its subcellular location is the membrane. In Caenorhabditis elegans, this protein is Transmembrane protein 151 homolog.